A 226-amino-acid chain; its full sequence is tRNA (guanine-N(1)-)-methyltransferase (226 aa).

Residues Gly-110 and 130–135 (IGDFIL) each bind S-adenosyl-L-methionine.

It belongs to the RNA methyltransferase TrmD family. In terms of assembly, homodimer.

It localises to the cytoplasm. The enzyme catalyses guanosine(37) in tRNA + S-adenosyl-L-methionine = N(1)-methylguanosine(37) in tRNA + S-adenosyl-L-homocysteine + H(+). Functionally, specifically methylates guanosine-37 in various tRNAs. This is tRNA (guanine-N(1)-)-methyltransferase from Nitratiruptor sp. (strain SB155-2).